The following is a 109-amino-acid chain: Large ribosomal subunit protein bL31B (109 aa).

The segment at 79–109 (NVRQPAQQPQPEEDALPAAKGKKKVVTKKKK) is disordered. The segment covering 98–109 (KGKKKVVTKKKK) has biased composition (basic residues).

This sequence belongs to the bacterial ribosomal protein bL31 family. Type B subfamily. As to quaternary structure, part of the 50S ribosomal subunit.

The polypeptide is Large ribosomal subunit protein bL31B (Chlamydia pneumoniae (Chlamydophila pneumoniae)).